The sequence spans 39 residues: SPbeta prophage-derived uncharacterized protein YorT (39 aa).

This chain is SPbeta prophage-derived uncharacterized protein YorT (yorT), found in Bacillus subtilis (strain 168).